Reading from the N-terminus, the 481-residue chain is Protein nucleotidyltransferase YdiU (481 aa).

Residues glycine 85, glycine 87, arginine 88, lysine 108, aspartate 120, glycine 121, arginine 171, and arginine 178 each coordinate ATP. Residue aspartate 248 is the Proton acceptor of the active site. Residues asparagine 249 and aspartate 258 each coordinate Mg(2+). Aspartate 258 serves as a coordination point for ATP. The segment at histidine 458–serine 481 is disordered.

This sequence belongs to the SELO family. Mg(2+) serves as cofactor. Mn(2+) is required as a cofactor.

It catalyses the reaction L-seryl-[protein] + ATP = 3-O-(5'-adenylyl)-L-seryl-[protein] + diphosphate. The catalysed reaction is L-threonyl-[protein] + ATP = 3-O-(5'-adenylyl)-L-threonyl-[protein] + diphosphate. It carries out the reaction L-tyrosyl-[protein] + ATP = O-(5'-adenylyl)-L-tyrosyl-[protein] + diphosphate. The enzyme catalyses L-histidyl-[protein] + UTP = N(tele)-(5'-uridylyl)-L-histidyl-[protein] + diphosphate. It catalyses the reaction L-seryl-[protein] + UTP = O-(5'-uridylyl)-L-seryl-[protein] + diphosphate. The catalysed reaction is L-tyrosyl-[protein] + UTP = O-(5'-uridylyl)-L-tyrosyl-[protein] + diphosphate. Functionally, nucleotidyltransferase involved in the post-translational modification of proteins. It can catalyze the addition of adenosine monophosphate (AMP) or uridine monophosphate (UMP) to a protein, resulting in modifications known as AMPylation and UMPylation. This is Protein nucleotidyltransferase YdiU from Hydrogenovibrio crunogenus (strain DSM 25203 / XCL-2) (Thiomicrospira crunogena).